The sequence spans 281 residues: MPTLQGTFWCFTLNFSGDAPSLSFNERVQYACWQHERVSHDHLQGYIQMKKRSTLKMMKELLPGAHLEVSKGTPEEASDYAMKEETRVAGPWTYGELLKKGSNKRKLLDRYKENPEDMELEDPAKARRCRAKIDKEKFIAEFKVEDDEQEWKKILEKEIEKIASPRSILWVYGPQGGEGKTSKAKELITRGWFYTRGGKKDDVAYSYVEDPTRHVVFDIPRDMQEYCNYSLIEMLKDRIIISNKYEPITNCQVYNIHVIVMANFLPDVTKISEDRIKIIYC.

The region spanning 3 to 97 (TLQGTFWCFT…VAGPWTYGEL (95 aa)) is the CRESS-DNA virus Rep endonuclease domain. An RCR-1 motif is present at residues 10–13 (CFTL). A divalent metal cation is bound by residues E36 and H42. Residues 42–44 (HLQ) carry the RCR-2 motif. Positions 51–71 (KRSTLKMMKELLPGAHLEVSK) match the Nuclear localization signal motif. The active-site For DNA cleavage activity is the Y80. The RCR-3 signature appears at 80-83 (YAMK). A divalent metal cation is bound at residue E85. The short motif at 97 to 103 (LLKKGSN) is the Nuclear localization signal element. 173-181 (GPQGGEGKT) serves as a coordination point for ATP.

This sequence belongs to the nanoviridea/circoviridae replication-associated protein family. In terms of assembly, homooligomer (Potential). Rep binds to repeated DNA motifs (iterons). Mg(2+) is required as a cofactor. It depends on Mn(2+) as a cofactor.

Its subcellular location is the host nucleus. The catalysed reaction is ATP + H2O = ADP + phosphate + H(+). Initiates and terminates the replication only of its own subviral DNA molecule. The closed circular ssDNA genome is first converted to a superhelical dsDNA. Rep binds a specific hairpin at the genome origin of replication. Introduces an endonucleolytic nick within the intergenic region of the genome, thereby initiating the rolling circle replication (RCR). Following cleavage, binds covalently to the 5'-phosphate of DNA as a tyrosyl ester. The cleavage gives rise to a free 3'-OH that serves as a primer for the cellular DNA polymerase. The polymerase synthesizes the (+) strand DNA by rolling circle mechanism. After one round of replication, a Rep-catalyzed nucleotidyl transfer reaction releases a circular single-stranded virus genome, thereby terminating the replication. Displays origin-specific DNA cleavage, nucleotidyl transferase, ATPase and helicase activities. This Milk vetch dwarf C1 alphasatellite (MVDC1A) protein is Para-Rep C1 (C1).